The sequence spans 375 residues: Queuine tRNA-ribosyltransferase (375 aa).

Asp89 (proton acceptor) is an active-site residue. Residues 89–93 (DSGGF), Asp143, Gln187, and Gly214 contribute to the substrate site. Positions 245–251 (GVGKPED) are RNA binding. The Nucleophile role is filled by Asp264. Positions 269-273 (TRNAR) are RNA binding; important for wobble base 34 recognition. Residues Cys302, Cys304, Cys307, and His333 each contribute to the Zn(2+) site.

This sequence belongs to the queuine tRNA-ribosyltransferase family. In terms of assembly, homodimer. Within each dimer, one monomer is responsible for RNA recognition and catalysis, while the other monomer binds to the replacement base PreQ1. Requires Zn(2+) as cofactor.

The catalysed reaction is 7-aminomethyl-7-carbaguanine + guanosine(34) in tRNA = 7-aminomethyl-7-carbaguanosine(34) in tRNA + guanine. Its pathway is tRNA modification; tRNA-queuosine biosynthesis. Catalyzes the base-exchange of a guanine (G) residue with the queuine precursor 7-aminomethyl-7-deazaguanine (PreQ1) at position 34 (anticodon wobble position) in tRNAs with GU(N) anticodons (tRNA-Asp, -Asn, -His and -Tyr). Catalysis occurs through a double-displacement mechanism. The nucleophile active site attacks the C1' of nucleotide 34 to detach the guanine base from the RNA, forming a covalent enzyme-RNA intermediate. The proton acceptor active site deprotonates the incoming PreQ1, allowing a nucleophilic attack on the C1' of the ribose to form the product. After dissociation, two additional enzymatic reactions on the tRNA convert PreQ1 to queuine (Q), resulting in the hypermodified nucleoside queuosine (7-(((4,5-cis-dihydroxy-2-cyclopenten-1-yl)amino)methyl)-7-deazaguanosine). This chain is Queuine tRNA-ribosyltransferase, found in Shigella flexneri serotype 5b (strain 8401).